A 268-amino-acid polypeptide reads, in one-letter code: Tryptophan synthase alpha chain (268 aa).

Active-site proton acceptor residues include glutamate 49 and aspartate 60.

This sequence belongs to the TrpA family. Tetramer of two alpha and two beta chains.

The enzyme catalyses (1S,2R)-1-C-(indol-3-yl)glycerol 3-phosphate + L-serine = D-glyceraldehyde 3-phosphate + L-tryptophan + H2O. It functions in the pathway amino-acid biosynthesis; L-tryptophan biosynthesis; L-tryptophan from chorismate: step 5/5. Its function is as follows. The alpha subunit is responsible for the aldol cleavage of indoleglycerol phosphate to indole and glyceraldehyde 3-phosphate. The protein is Tryptophan synthase alpha chain of Erwinia tasmaniensis (strain DSM 17950 / CFBP 7177 / CIP 109463 / NCPPB 4357 / Et1/99).